The primary structure comprises 257 residues: UPF0246 protein VCM66_2278 (257 aa).

Belongs to the UPF0246 family.

The chain is UPF0246 protein VCM66_2278 from Vibrio cholerae serotype O1 (strain M66-2).